Here is a 151-residue protein sequence, read N- to C-terminus: Ribosome maturation factor RimP (151 aa).

The protein belongs to the RimP family.

It is found in the cytoplasm. Required for maturation of 30S ribosomal subunits. The chain is Ribosome maturation factor RimP from Shewanella halifaxensis (strain HAW-EB4).